A 193-amino-acid chain; its full sequence is Ion-translocating oxidoreductase complex subunit A (193 aa).

Helical transmembrane passes span 5–25 (LMLF…FLGL), 39–59 (LGMG…AWLI), 62–82 (FILL…FIIA), 102–122 (LLGI…VALL), 134–154 (ALYG…FAAI), and 171–191 (SIAL…TGLV).

It belongs to the NqrDE/RnfAE family. In terms of assembly, the complex is composed of six subunits: RnfA, RnfB, RnfC, RnfD, RnfE and RnfG.

Its subcellular location is the cell inner membrane. Its function is as follows. Part of a membrane-bound complex that couples electron transfer with translocation of ions across the membrane. The polypeptide is Ion-translocating oxidoreductase complex subunit A (Sodalis glossinidius (strain morsitans)).